Here is a 1353-residue protein sequence, read N- to C-terminus: Xanthine dehydrogenase (1353 aa).

The region spanning 17 to 104 (STLIFFVNGK…GSAVTTVEGI (88 aa)) is the 2Fe-2S ferredoxin-type domain. Positions 56, 61, 64, 86, 126, 129, 161, and 163 each coordinate [2Fe-2S] cluster. An FAD-binding PCMH-type domain is found at 245–434 (YKGERATWYR…VGLYFPKTLE (190 aa)). FAD contacts are provided by residues 273-280 (LVVGNTEI), F353, 363-367 (SLGGN), D376, L424, and K442. Positions 790 and 821 each coordinate Mo-molybdopterin. Substrate-binding residues include E825 and R903. R935 serves as a coordination point for Mo-molybdopterin. Residue F937 coordinates substrate. A1102 lines the Mo-molybdopterin pocket. E1285 serves as the catalytic Proton acceptor.

The protein belongs to the xanthine dehydrogenase family. In terms of assembly, homodimer. It depends on FAD as a cofactor. Mo-molybdopterin is required as a cofactor. [2Fe-2S] cluster serves as cofactor.

It localises to the peroxisome. The enzyme catalyses xanthine + NAD(+) + H2O = urate + NADH + H(+). It catalyses the reaction hypoxanthine + NAD(+) + H2O = xanthine + NADH + H(+). Its function is as follows. Key enzyme in purine degradation. Catalyzes the oxidation of hypoxanthine to xanthine. Catalyzes the oxidation of xanthine to uric acid. This chain is Xanthine dehydrogenase (XDH), found in Calliphora vicina (Blue blowfly).